The sequence spans 331 residues: MKMNTERFNLTVDEYLAETNVLFYLNDAVTQLLEHKEEYTQFGVVRYFAEYFTSVKNGNHVLFREFSYIKATPHNRESFIHIFWKCFRQIGKNGDLLAMSEYSSLLQLLCPDFPAEMVQNTARIVLIDDVTDCLMSFSDFIYSFQIQFFYEEFVESISAIYQDLLSGKNPNTVIVPTSTSVEQLSSSANDKPDVQEGVDATIFCECIEGLCERFKHKYPSTVAIKEILDNTQRVSFYGFLMALAKHEGINQDIGALPNKPDLLIDPEMDQELERLIAQVAISPTSNNNSSSSALGQKEMSKKASPRKSLHQRKRIEMESDGSTEETDSSEN.

The tract at residues 283-331 (PTSNNNSSSSALGQKEMSKKASPRKSLHQRKRIEMESDGSTEETDSSEN) is disordered. Residues 303–313 (ASPRKSLHQRK) show a composition bias toward basic residues. A compositionally biased stretch (acidic residues) spans 318–331 (ESDGSTEETDSSEN).

Belongs to the CSTPP1 family. As to quaternary structure, interacts with PCM1. Interacts with the complex TPGC. Binds to alpha-tubulin. As to expression, expression in elevated in ciliated tissues/organs, including brain, spinal cord, kidney, eyes, ears and lateral line.

The protein localises to the cytoplasm. It localises to the cytoskeleton. The protein resides in the microtubule organizing center. It is found in the centrosome. Its subcellular location is the centriolar satellite. Regulator of the tubulin polyglutamylase complex (TPGC) that controls cytoskeletal organization, nuclear shape, and cilium disassembly by balancing microtubule and actin assembly. Regulates the assembly and stability of the TPGC and thereby modulates polyglutamylation of the microtubule, which antagonizes MAP4 binding. The protein is Centriolar satellite-associated tubulin polyglutamylase complex regulator 1 (cstpp1) of Danio rerio (Zebrafish).